A 247-amino-acid polypeptide reads, in one-letter code: DNA polymerase sliding clamp (247 aa).

This sequence belongs to the PCNA family. As to quaternary structure, homotrimer. The subunits circularize to form a toroid; DNA passes through its center. Replication factor C (RFC) is required to load the toroid on the DNA.

Functionally, sliding clamp subunit that acts as a moving platform for DNA processing. Responsible for tethering the catalytic subunit of DNA polymerase and other proteins to DNA during high-speed replication. The sequence is that of DNA polymerase sliding clamp from Natronomonas pharaonis (strain ATCC 35678 / DSM 2160 / CIP 103997 / JCM 8858 / NBRC 14720 / NCIMB 2260 / Gabara) (Halobacterium pharaonis).